Here is a 602-residue protein sequence, read N- to C-terminus: Cholinesterase (602 aa).

The first 28 residues, 1–28, serve as a signal peptide directing secretion; it reads MQSKGTIISIQFLLRFLLLWVLIGKSHT. An N-linked (GlcNAc...) asparagine glycan is attached at asparagine 85. The cysteines at positions 93 and 120 are disulfide-linked. N-linked (GlcNAc...) asparagine glycosylation occurs at asparagine 134. 144–145 is a binding site for substrate; sequence GG. The active-site Acyl-ester intermediate is serine 226. Residue serine 226 is modified to Phosphoserine. Asparagine 269 and asparagine 284 each carry an N-linked (GlcNAc...) asparagine glycan. Cysteine 280 and cysteine 291 are joined by a disulfide. Catalysis depends on glutamate 353, which acts as the Charge relay system. A glycan (N-linked (GlcNAc...) asparagine) is linked at asparagine 369. The cysteines at positions 428 and 547 are disulfide-linked. The Charge relay system role is filled by histidine 466. N-linked (GlcNAc...) asparagine glycosylation is found at asparagine 483, asparagine 509, asparagine 513, and asparagine 514.

It belongs to the type-B carboxylesterase/lipase family. Homotetramer; disulfide-linked. Dimer of dimers.

Its subcellular location is the secreted. The enzyme catalyses an acylcholine + H2O = a carboxylate + choline + H(+). In terms of biological role, esterase with broad substrate specificity. Contributes to the inactivation of the neurotransmitter acetylcholine. Can degrade neurotoxic organophosphate esters. This Felis catus (Cat) protein is Cholinesterase (BCHE).